A 239-amino-acid polypeptide reads, in one-letter code: DnaA regulatory inactivator Hda (239 aa).

It belongs to the DnaA family. HdA subfamily. In terms of assembly, the active form seems to be an ADP-bound monomer. Forms the RIDA complex (regulatory inactivation of DnaA) of ATP-DnaA, ADP-Hda and the DNA-loaded beta sliding clamp (dnaN).

Functionally, mediates the interaction of DNA replication initiator protein DnaA with DNA polymerase subunit beta sliding clamp (dnaN). Stimulates hydrolysis of ATP-DnaA to ADP-DnaA, rendering DnaA inactive for reinitiation, a process called regulatory inhibition of DnaA or RIDA. This Yersinia pseudotuberculosis serotype O:1b (strain IP 31758) protein is DnaA regulatory inactivator Hda.